The chain runs to 400 residues: Probable aspartate/prephenate aminotransferase (400 aa).

Residues Gly-39, Trp-125, and Asn-175 each coordinate L-aspartate. Lys-239 is subject to N6-(pyridoxal phosphate)lysine. Residue Arg-375 participates in L-aspartate binding.

It belongs to the class-I pyridoxal-phosphate-dependent aminotransferase family. In terms of assembly, homodimer. Pyridoxal 5'-phosphate serves as cofactor.

The protein resides in the cytoplasm. The enzyme catalyses L-aspartate + 2-oxoglutarate = oxaloacetate + L-glutamate. The catalysed reaction is L-arogenate + 2-oxoglutarate = prephenate + L-glutamate. Its function is as follows. Catalyzes the reversible conversion of aspartate and 2-oxoglutarate to glutamate and oxaloacetate. Can also transaminate prephenate in the presence of glutamate. The polypeptide is Probable aspartate/prephenate aminotransferase (aspC) (Rhizobium leguminosarum bv. phaseoli).